The following is a 697-amino-acid chain: Elongation factor G 2 (697 aa).

The region spanning Ser5–Asn280 is the tr-type G domain. GTP is bound by residues Ala14–Thr21, Asp78–His82, and Asn132–Asp135.

This sequence belongs to the TRAFAC class translation factor GTPase superfamily. Classic translation factor GTPase family. EF-G/EF-2 subfamily.

The protein resides in the cytoplasm. Catalyzes the GTP-dependent ribosomal translocation step during translation elongation. During this step, the ribosome changes from the pre-translocational (PRE) to the post-translocational (POST) state as the newly formed A-site-bound peptidyl-tRNA and P-site-bound deacylated tRNA move to the P and E sites, respectively. Catalyzes the coordinated movement of the two tRNA molecules, the mRNA and conformational changes in the ribosome. In Shewanella sp. (strain MR-4), this protein is Elongation factor G 2.